The primary structure comprises 562 residues: Glutamine--tRNA ligase (562 aa).

The short motif at 35–45 (PEPNGYLHIGH) is the 'HIGH' region element. Residues 36–38 (EPN) and 42–48 (HIGHAKS) contribute to the ATP site. L-glutamine contacts are provided by D68 and Y213. Residues T232 and 264-265 (RL) contribute to the ATP site. The 'KMSKS' region motif lies at 271–275 (ITSKR).

It belongs to the class-I aminoacyl-tRNA synthetase family. Monomer.

The protein resides in the cytoplasm. It carries out the reaction tRNA(Gln) + L-glutamine + ATP = L-glutaminyl-tRNA(Gln) + AMP + diphosphate. In Neisseria gonorrhoeae (strain ATCC 700825 / FA 1090), this protein is Glutamine--tRNA ligase.